The chain runs to 303 residues: N-acetyl-D-glucosamine kinase (303 aa).

Residues G4–K11 and G133–V140 each bind ATP. The Zn(2+) site is built by H157, C177, C179, and C184.

The protein belongs to the ROK (NagC/XylR) family. NagK subfamily.

The catalysed reaction is N-acetyl-D-glucosamine + ATP = N-acetyl-D-glucosamine 6-phosphate + ADP + H(+). The protein operates within cell wall biogenesis; peptidoglycan recycling. Functionally, catalyzes the phosphorylation of N-acetyl-D-glucosamine (GlcNAc) derived from cell-wall degradation, yielding GlcNAc-6-P. In Yersinia enterocolitica serotype O:8 / biotype 1B (strain NCTC 13174 / 8081), this protein is N-acetyl-D-glucosamine kinase.